A 471-amino-acid polypeptide reads, in one-letter code: Arginine biosynthesis bifunctional protein ArgJ, mitochondrial (471 aa).

Residues 1–33 (MAMAGCNGFFLHQLRQPRLQLARQLGRTPSRAY) constitute a mitochondrion transit peptide. 6 residues coordinate substrate: Thr-201, Lys-230, Thr-241, Glu-327, Asn-466, and Thr-471. Catalysis depends on Thr-241, which acts as the Nucleophile.

It belongs to the ArgJ family. Heterodimer of an alpha and a beta chain. The alpha and beta chains are autoproteolytically processed from a single precursor protein within the mitochondrion.

It is found in the mitochondrion matrix. The enzyme catalyses N(2)-acetyl-L-ornithine + L-glutamate = N-acetyl-L-glutamate + L-ornithine. It carries out the reaction L-glutamate + acetyl-CoA = N-acetyl-L-glutamate + CoA + H(+). Its pathway is amino-acid biosynthesis; L-arginine biosynthesis; L-ornithine and N-acetyl-L-glutamate from L-glutamate and N(2)-acetyl-L-ornithine (cyclic): step 1/1. It participates in amino-acid biosynthesis; L-arginine biosynthesis; N(2)-acetyl-L-ornithine from L-glutamate: step 1/4. Catalyzes two activities which are involved in the cyclic version of arginine biosynthesis: the synthesis of acetylglutamate from glutamate and acetyl-CoA, and of ornithine by transacetylation between acetylornithine and glutamate. The polypeptide is Arginine biosynthesis bifunctional protein ArgJ, mitochondrial (Chaetomium globosum (strain ATCC 6205 / CBS 148.51 / DSM 1962 / NBRC 6347 / NRRL 1970) (Soil fungus)).